Reading from the N-terminus, the 304-residue chain is Cell surface-binding protein OPG105 (304 aa).

The Alpha-carbonic anhydrase domain occupies 1–235 (MSQQLSPINI…NDDTEVYYSG (235 aa)). Residues 1–275 (MSQQLSPINI…YQKYIEGNKT (275 aa)) are Virion surface-facing. A helical membrane pass occupies residues 276–294 (FAIIAIVFVYILTAILFLM). Residues 295–304 (SRRYSREKQN) lie on the Intravirion side of the membrane.

This sequence belongs to the alpha-carbonic anhydrase family. In terms of assembly, homodimer; disulfide-linked. Post-translationally, apparently non-glycosylated.

The protein localises to the virion membrane. Functionally, binds to chondroitin sulfate on the cell surface to provide virion attachment to target cell. The chain is Cell surface-binding protein OPG105 (OPG105) from Homo sapiens (Human).